Here is a 511-residue protein sequence, read N- to C-terminus: Glucans biosynthesis protein G (511 aa).

A signal peptide spans 1–22 (MMKMRWLSAAVMLTLYTSSSWA).

The protein belongs to the OpgD/OpgG family.

It localises to the periplasm. The protein operates within glycan metabolism; osmoregulated periplasmic glucan (OPG) biosynthesis. In terms of biological role, involved in the biosynthesis of osmoregulated periplasmic glucans (OPGs). This chain is Glucans biosynthesis protein G, found in Escherichia coli O81 (strain ED1a).